The primary structure comprises 163 residues: Urease accessory protein UreE (163 aa).

Positions 144-163 (QPEPGAYGGSSAGSHDGHHH) are disordered.

This sequence belongs to the UreE family.

Its subcellular location is the cytoplasm. In terms of biological role, involved in urease metallocenter assembly. Binds nickel. Probably functions as a nickel donor during metallocenter assembly. The polypeptide is Urease accessory protein UreE (Aliivibrio fischeri (strain MJ11) (Vibrio fischeri)).